Reading from the N-terminus, the 427-residue chain is MSRSETLFANAQKHIPGGVNSPVRAFKSVGGTPLFFKHAAGAYVTDEDDKRYVDYVGSWGPMILGHSHPEVLDAVRSQLEHGLSYGAPTAMETEMADLVCALVPSMEMVRMVSSGTEATMSAIRLARGFTGRDSIIKFEGCYHGHSDSLLVKAGSGALTLGVPSSPGVPAAFAKHTLTVPFNNLDAVRDLLAEVGQEVACIIVEPVAGNMNCVPPAPGYLQGLRDLCDEHGVVLIFDEVMTGFRVALGGAQAYYGVTPDLSTFGKIIGGGMPVGCFGGKREIMSHIAPLGPVYQAGTLSGNPLAMAAGLTTLRLISRPGFHDELSDYTRRLLEGLQQRADAAGIAFVTTQAGGMFGLYFSEAREIVTFEDVMTSDAERFKRFFHLMLEGGVYLAPSAFEAGFTSIAHGDAELKLTLDAAEKAFAALK.

Lysine 265 bears the N6-(pyridoxal phosphate)lysine mark.

This sequence belongs to the class-III pyridoxal-phosphate-dependent aminotransferase family. HemL subfamily. In terms of assembly, homodimer. Pyridoxal 5'-phosphate serves as cofactor.

The protein localises to the cytoplasm. It catalyses the reaction (S)-4-amino-5-oxopentanoate = 5-aminolevulinate. It participates in porphyrin-containing compound metabolism; protoporphyrin-IX biosynthesis; 5-aminolevulinate from L-glutamyl-tRNA(Glu): step 2/2. The protein is Glutamate-1-semialdehyde 2,1-aminomutase of Pseudomonas savastanoi pv. phaseolicola (strain 1448A / Race 6) (Pseudomonas syringae pv. phaseolicola (strain 1448A / Race 6)).